Here is a 227-residue protein sequence, read N- to C-terminus: Phosphatidylserine decarboxylase proenzyme (227 aa).

Ser-169 acts as the Schiff-base intermediate with substrate; via pyruvic acid in catalysis. Ser-169 bears the Pyruvic acid (Ser); by autocatalysis mark. A disordered region spans residues 197 to 227; the sequence is GRIPTPESGRSSSAEATAAPSASSARRSSAS. Over residues 206 to 227 the composition is skewed to low complexity; it reads RSSSAEATAAPSASSARRSSAS.

Belongs to the phosphatidylserine decarboxylase family. PSD-A subfamily. In terms of assembly, heterodimer of a large membrane-associated beta subunit and a small pyruvoyl-containing alpha subunit. Pyruvate serves as cofactor. Post-translationally, is synthesized initially as an inactive proenzyme. Formation of the active enzyme involves a self-maturation process in which the active site pyruvoyl group is generated from an internal serine residue via an autocatalytic post-translational modification. Two non-identical subunits are generated from the proenzyme in this reaction, and the pyruvate is formed at the N-terminus of the alpha chain, which is derived from the carboxyl end of the proenzyme. The post-translation cleavage follows an unusual pathway, termed non-hydrolytic serinolysis, in which the side chain hydroxyl group of the serine supplies its oxygen atom to form the C-terminus of the beta chain, while the remainder of the serine residue undergoes an oxidative deamination to produce ammonia and the pyruvoyl prosthetic group on the alpha chain.

It is found in the cell membrane. It carries out the reaction a 1,2-diacyl-sn-glycero-3-phospho-L-serine + H(+) = a 1,2-diacyl-sn-glycero-3-phosphoethanolamine + CO2. It functions in the pathway phospholipid metabolism; phosphatidylethanolamine biosynthesis; phosphatidylethanolamine from CDP-diacylglycerol: step 2/2. Functionally, catalyzes the formation of phosphatidylethanolamine (PtdEtn) from phosphatidylserine (PtdSer). In Salinibacter ruber (strain DSM 13855 / M31), this protein is Phosphatidylserine decarboxylase proenzyme.